We begin with the raw amino-acid sequence, 294 residues long: tRNA dimethylallyltransferase (294 aa).

ATP is bound at residue 11 to 18; it reads GPTAVGKT. Substrate is bound at residue 13 to 18; sequence TAVGKT. The tract at residues 36–39 is interaction with substrate tRNA; sequence DSQQ.

Belongs to the IPP transferase family. Monomer. Mg(2+) is required as a cofactor.

The catalysed reaction is adenosine(37) in tRNA + dimethylallyl diphosphate = N(6)-dimethylallyladenosine(37) in tRNA + diphosphate. Its function is as follows. Catalyzes the transfer of a dimethylallyl group onto the adenine at position 37 in tRNAs that read codons beginning with uridine, leading to the formation of N6-(dimethylallyl)adenosine (i(6)A). In Lactococcus lactis subsp. cremoris (strain SK11), this protein is tRNA dimethylallyltransferase.